The sequence spans 382 residues: Bifunctional enzyme IspD/IspF (382 aa).

A 2-C-methyl-D-erythritol 4-phosphate cytidylyltransferase region spans residues 1-226 (MTLAVLIVAA…RSTMDNIPDI (226 aa)). The segment at 227-382 (RLGNGYDVHR…ALATATLVRA (156 aa)) is 2-C-methyl-D-erythritol 2,4-cyclodiphosphate synthase. Residues D233 and H235 each coordinate a divalent metal cation. 4-CDP-2-C-methyl-D-erythritol 2-phosphate contacts are provided by residues 233-235 (DVH) and 259-260 (HS). H267 serves as a coordination point for a divalent metal cation. 4-CDP-2-C-methyl-D-erythritol 2-phosphate contacts are provided by residues 281-283 (DIG), 357-360 (TTSE), F364, and R367.

In the N-terminal section; belongs to the IspD/TarI cytidylyltransferase family. IspD subfamily. This sequence in the C-terminal section; belongs to the IspF family. A divalent metal cation serves as cofactor.

It catalyses the reaction 2-C-methyl-D-erythritol 4-phosphate + CTP + H(+) = 4-CDP-2-C-methyl-D-erythritol + diphosphate. It carries out the reaction 4-CDP-2-C-methyl-D-erythritol 2-phosphate = 2-C-methyl-D-erythritol 2,4-cyclic diphosphate + CMP. It participates in isoprenoid biosynthesis; isopentenyl diphosphate biosynthesis via DXP pathway; isopentenyl diphosphate from 1-deoxy-D-xylulose 5-phosphate: step 2/6. The protein operates within isoprenoid biosynthesis; isopentenyl diphosphate biosynthesis via DXP pathway; isopentenyl diphosphate from 1-deoxy-D-xylulose 5-phosphate: step 4/6. Its function is as follows. Bifunctional enzyme that catalyzes the formation of 4-diphosphocytidyl-2-C-methyl-D-erythritol from CTP and 2-C-methyl-D-erythritol 4-phosphate (MEP) (IspD), and catalyzes the conversion of 4-diphosphocytidyl-2-C-methyl-D-erythritol 2-phosphate (CDP-ME2P) to 2-C-methyl-D-erythritol 2,4-cyclodiphosphate (ME-CPP) with a corresponding release of cytidine 5-monophosphate (CMP) (IspF). The chain is Bifunctional enzyme IspD/IspF from Ruegeria sp. (strain TM1040) (Silicibacter sp.).